The sequence spans 379 residues: UDP-4-amino-4-deoxy-L-arabinose--oxoglutarate aminotransferase (379 aa).

An N6-(pyridoxal phosphate)lysine modification is found at Lys182.

The protein belongs to the DegT/DnrJ/EryC1 family. ArnB subfamily. In terms of assembly, homodimer. The cofactor is pyridoxal 5'-phosphate.

It catalyses the reaction UDP-4-amino-4-deoxy-beta-L-arabinose + 2-oxoglutarate = UDP-beta-L-threo-pentopyranos-4-ulose + L-glutamate. The protein operates within nucleotide-sugar biosynthesis; UDP-4-deoxy-4-formamido-beta-L-arabinose biosynthesis; UDP-4-deoxy-4-formamido-beta-L-arabinose from UDP-alpha-D-glucuronate: step 2/3. It functions in the pathway bacterial outer membrane biogenesis; lipopolysaccharide biosynthesis. Functionally, catalyzes the conversion of UDP-4-keto-arabinose (UDP-Ara4O) to UDP-4-amino-4-deoxy-L-arabinose (UDP-L-Ara4N). The modified arabinose is attached to lipid A and is required for resistance to polymyxin and cationic antimicrobial peptides. This Enterobacter sp. (strain 638) protein is UDP-4-amino-4-deoxy-L-arabinose--oxoglutarate aminotransferase.